The primary structure comprises 257 residues: Receptor expression-enhancing protein 4 (257 aa).

The next 2 membrane-spanning stretches (helical) occupy residues 1–21 (MVSW…CPAY) and 42–62 (WIVF…ISWF). Ser152 and Ser194 each carry phosphoserine. Residues 183-257 (PIGYRAGGLQ…KKTVPSDVDS (75 aa)) are disordered. Thr196 carries the phosphothreonine modification. Ser202 is modified (phosphoserine). Phosphothreonine is present on Thr250. Ser253 carries the phosphoserine modification.

Belongs to the DP1 family. Expressed in circumvallate papillae and testis.

The protein resides in the endoplasmic reticulum membrane. In terms of biological role, microtubule-binding protein required to ensure proper cell division and nuclear envelope reassembly by sequestering the endoplasmic reticulum away from chromosomes during mitosis. Probably acts by clearing the endoplasmic reticulum membrane from metaphase chromosomes. This is Receptor expression-enhancing protein 4 (REEP4) from Homo sapiens (Human).